A 491-amino-acid chain; its full sequence is Ketol-acid reductoisomerase (NADP(+)) (491 aa).

The KARI N-terminal Rossmann domain occupies 16 to 207 (IKKCRFMKEN…GGHRAGVLES (192 aa)). Residues 44-47 (CGSQ), Lys-67, Ser-77, and 107-109 (DKQ) contribute to the NADP(+) site. His-131 is an active-site residue. Position 157 (Gly-157) interacts with NADP(+). KARI C-terminal knotted domains are found at residues 208 to 344 (SFIA…NILS) and 345 to 484 (YSEK…MKEM). Asp-216, Glu-220, Glu-389, and Glu-393 together coordinate Mg(2+). Ser-414 is a substrate binding site.

The protein belongs to the ketol-acid reductoisomerase family. The cofactor is Mg(2+).

The catalysed reaction is (2R)-2,3-dihydroxy-3-methylbutanoate + NADP(+) = (2S)-2-acetolactate + NADPH + H(+). It catalyses the reaction (2R,3R)-2,3-dihydroxy-3-methylpentanoate + NADP(+) = (S)-2-ethyl-2-hydroxy-3-oxobutanoate + NADPH + H(+). Its pathway is amino-acid biosynthesis; L-isoleucine biosynthesis; L-isoleucine from 2-oxobutanoate: step 2/4. The protein operates within amino-acid biosynthesis; L-valine biosynthesis; L-valine from pyruvate: step 2/4. Its function is as follows. Involved in the biosynthesis of branched-chain amino acids (BCAA). Catalyzes an alkyl-migration followed by a ketol-acid reduction of (S)-2-acetolactate (S2AL) to yield (R)-2,3-dihydroxy-isovalerate. In the isomerase reaction, S2AL is rearranged via a Mg-dependent methyl migration to produce 3-hydroxy-3-methyl-2-ketobutyrate (HMKB). In the reductase reaction, this 2-ketoacid undergoes a metal-dependent reduction by NADPH to yield (R)-2,3-dihydroxy-isovalerate. This is Ketol-acid reductoisomerase (NADP(+)) from Buchnera aphidicola subsp. Schizaphis graminum (strain Sg).